The sequence spans 330 residues: Chromatin modification-related protein EAF3 (330 aa).

The Tudor-knot domain occupies 5–62; sequence DGEKVLCFHGPLIYAAKILKAEKWTGEENVTGQVGPHYLVHYDGWKKTWDEWVPETRL. Residues 96 to 129 form a disordered region; it reads TSAASSLKRAKDSELPDRKSASRGTKRSREHVEA. The span at 104 to 115 shows a compositional bias: basic and acidic residues; that stretch reads RAKDSELPDRKS. The MRG domain maps to 135 to 329; that stretch reads KRPEVKISLP…ASPAYHRISS (195 aa).

The protein belongs to the MRG family. In terms of assembly, component of the NuA4 histone acetyltransferase complex.

It is found in the nucleus. Functionally, involved in deacetylation of histones, chromatin assembly and chromosome segregation. May act as a transcriptional oscillator, directing histone deacetylases to specific chromosomal domains. Component of the NuA4 histone acetyltransferase complex which is involved in transcriptional activation of selected genes principally by acetylation of nucleosomal histone H4 and H2A. The NuA4 complex is also involved in DNA repair. This is Chromatin modification-related protein EAF3 (EAF3) from Mycosarcoma maydis (Corn smut fungus).